A 261-amino-acid chain; its full sequence is 4-phosphopantoate--beta-alanine ligase (261 aa).

ATP is bound by residues R17, R39, 181-182, 187-188, and 199-200; these read DL, RS, and NI.

Belongs to the archaeal phosphopantothenate synthetase family. In terms of assembly, homodimer.

It catalyses the reaction (R)-4-phosphopantoate + beta-alanine + ATP = (R)-4'-phosphopantothenate + AMP + diphosphate + H(+). The protein operates within cofactor biosynthesis; coenzyme A biosynthesis. Catalyzes the condensation of (R)-4-phosphopantoate and beta-alanine to 4'-phosphopantothenate in the CoA biosynthesis pathway. This Thermococcus onnurineus (strain NA1) protein is 4-phosphopantoate--beta-alanine ligase.